The following is a 307-amino-acid chain: MSSPHGGLDDQIERLMQCKPLPEPEVRALCEKAKEILMEESNVQPVKSPVTICGDIHGQFHDLAELFRIGGKCPDTNYLFMGDYVDRGYYSVETVTLLVALKVRYPQRITILRGNHESRQITQVYGFYDECLRKYGNANVWKTFTDLFDYFPLTALVESEIFCLHGGLSPSIETLDNIRNFDRVQEVPHEGPMCDLLWSDPDDRCGWGISPRGAGYTFGQDISEQFNHTNNLRLIARAHQLVMEGFNWAHEQKVVTIFSAPNYCYRCGNMASILEVDDCREHTFIQFEPAPRRGEPDVTRRTPDYFL.

Mn(2+)-binding residues include D55, H57, D83, and N115. The active-site Proton donor is the H116. The Mn(2+) site is built by H165 and H239.

The protein belongs to the PPP phosphatase family. PP-2A subfamily. Mn(2+) serves as cofactor.

It is found in the cytoplasm. It carries out the reaction O-phospho-L-seryl-[protein] + H2O = L-seryl-[protein] + phosphate. The enzyme catalyses O-phospho-L-threonyl-[protein] + H2O = L-threonyl-[protein] + phosphate. The chain is Serine/threonine-protein phosphatase PP2A-2 catalytic subunit (PP2A2) from Oryza sativa subsp. indica (Rice).